Consider the following 251-residue polypeptide: Hydroxyacylglutathione hydrolase (251 aa).

Residues H53, H55, D57, H58, H110, D127, and H165 each coordinate Zn(2+).

It belongs to the metallo-beta-lactamase superfamily. Glyoxalase II family. In terms of assembly, monomer. Requires Zn(2+) as cofactor.

The catalysed reaction is an S-(2-hydroxyacyl)glutathione + H2O = a 2-hydroxy carboxylate + glutathione + H(+). It participates in secondary metabolite metabolism; methylglyoxal degradation; (R)-lactate from methylglyoxal: step 2/2. In terms of biological role, thiolesterase that catalyzes the hydrolysis of S-D-lactoyl-glutathione to form glutathione and D-lactic acid. This chain is Hydroxyacylglutathione hydrolase, found in Salmonella arizonae (strain ATCC BAA-731 / CDC346-86 / RSK2980).